The chain runs to 344 residues: Proline-rich transmembrane protein 2 (344 aa).

Disordered regions lie at residues 1-220 and 233-265; these read MAAS…GAPP and GRAHGGHPGSPRGSLSRHPSSQLAGPGVEGGEG. The Cytoplasmic segment spans residues 1 to 272; it reads MAASSSEVSE…GEGTQKPRDY (272 aa). Position 28 is a phosphoserine (Ser-28). Residues 69-82 show a composition bias toward low complexity; that stretch reads PETTETPVETPETV. A phosphothreonine mark is found at Thr-74 and Thr-78. Polar residues predominate over residues 124–143; sequence AEQQSAAPPEPTSEQALQLN. Positions 151–162 are enriched in pro residues; that stretch reads TSQPPPKPPLQA. Positions 168 to 178 are enriched in polar residues; that stretch reads ENPTTEVLTES. Residues 201–211 are compositionally biased toward pro residues; the sequence is APQPHSPPSTK. The residue at position 242 (Ser-242) is a Phosphoserine. Omega-N-methylarginine is present on Arg-244. Phosphoserine is present on residues Ser-252 and Ser-253. Residues 273–293 constitute an intramembrane region (helical); it reads IILAILSCFCPMWPVNIVAFA. At 294–321 the chain is on the cytoplasmic side; the sequence is YAVMSRNSLQQGDVDGAQRLGRVAKLLS. The chain crosses the membrane as a helical span at residues 322-342; it reads IVALVGGVLIIIASCVINLGV. Residues 343-344 are Extracellular-facing; the sequence is YK.

It belongs to the CD225/Dispanin family. As to quaternary structure, component of the outer core of AMPAR complex. AMPAR complex consists of an inner core made of 4 pore-forming GluA/GRIA proteins (GRIA1, GRIA2, GRIA3 and GRIA4) and 4 major auxiliary subunits arranged in a twofold symmetry. One of the two pairs of distinct binding sites is occupied either by CNIH2, CNIH3 or CACNG2, CACNG3. The other harbors CACNG2, CACNG3, CACNG4, CACNG8 or GSG1L. This inner core of AMPAR complex is complemented by outer core constituents binding directly to the GluA/GRIA proteins at sites distinct from the interaction sites of the inner core constituents. Outer core constituents include at least PRRT1, PRRT2, CKAMP44/SHISA9, FRRS1L and NRN1. The proteins of the inner and outer core serve as a platform for other, more peripherally associated AMPAR constituents. Alone or in combination, these auxiliary subunits control the gating and pharmacology of the AMPAR complex and profoundly impact their biogenesis and protein processing. Interacts with intersectin 1/ITSN1. Interacts with SNARE complex components, including SNAP25, STX1A, SYT1 and SYT2; this interaction may inhibit SNARE complex formation. As to expression, neuron-specific expression throughout the brain, including hippocampus (at protein level).

The protein localises to the cell membrane. Its subcellular location is the presynaptic cell membrane. It is found in the synapse. The protein resides in the cell projection. It localises to the axon. The protein localises to the cytoplasmic vesicle. Its subcellular location is the secretory vesicle. It is found in the synaptic vesicle membrane. The protein resides in the postsynaptic density membrane. It localises to the dendritic spine. Its function is as follows. As a component of the outer core of AMPAR complex, may be involved in synaptic transmission in the central nervous system. In hippocampal neurons, in presynaptic terminals, plays an important role in the final steps of neurotransmitter release, possibly by regulating Ca(2+)-sensing. In the cerebellum, may inhibit SNARE complex formation and down-regulate short-term facilitation. This chain is Proline-rich transmembrane protein 2 (Prrt2), found in Rattus norvegicus (Rat).